Here is a 312-residue protein sequence, read N- to C-terminus: Methionyl-tRNA formyltransferase (312 aa).

A (6S)-5,6,7,8-tetrahydrofolate-binding site is contributed by 109–112 (SILP).

Belongs to the Fmt family.

It catalyses the reaction L-methionyl-tRNA(fMet) + (6R)-10-formyltetrahydrofolate = N-formyl-L-methionyl-tRNA(fMet) + (6S)-5,6,7,8-tetrahydrofolate + H(+). Its function is as follows. Attaches a formyl group to the free amino group of methionyl-tRNA(fMet). The formyl group appears to play a dual role in the initiator identity of N-formylmethionyl-tRNA by promoting its recognition by IF2 and preventing the misappropriation of this tRNA by the elongation apparatus. The protein is Methionyl-tRNA formyltransferase of Dictyoglomus thermophilum (strain ATCC 35947 / DSM 3960 / H-6-12).